We begin with the raw amino-acid sequence, 1295 residues long: Phosphoribosylformylglycinamidine synthase (1295 aa).

The tract at residues 305-327 (WPGAATGSGGEIRDEGATGRGAK) is disordered. ATP is bound by residues 307–318 (GAATGSGGEIRD), 386–388 (TGY), and A678. Residues D679, E718, N722, and D884 each coordinate Mg(2+). ATP is bound at residue S886. A Glutamine amidotransferase type-1 domain is found at 1041-1295 (KVAVLREQGG…IFRNARKQLG (255 aa)). C1135 serves as the catalytic Nucleophile. Catalysis depends on residues H1260 and E1262.

This sequence in the N-terminal section; belongs to the FGAMS family. In terms of assembly, monomer.

Its subcellular location is the cytoplasm. The catalysed reaction is N(2)-formyl-N(1)-(5-phospho-beta-D-ribosyl)glycinamide + L-glutamine + ATP + H2O = 2-formamido-N(1)-(5-O-phospho-beta-D-ribosyl)acetamidine + L-glutamate + ADP + phosphate + H(+). It participates in purine metabolism; IMP biosynthesis via de novo pathway; 5-amino-1-(5-phospho-D-ribosyl)imidazole from N(2)-formyl-N(1)-(5-phospho-D-ribosyl)glycinamide: step 1/2. In terms of biological role, phosphoribosylformylglycinamidine synthase involved in the purines biosynthetic pathway. Catalyzes the ATP-dependent conversion of formylglycinamide ribonucleotide (FGAR) and glutamine to yield formylglycinamidine ribonucleotide (FGAM) and glutamate. The chain is Phosphoribosylformylglycinamidine synthase from Salmonella choleraesuis (strain SC-B67).